The sequence spans 415 residues: Histidine--tRNA ligase (415 aa).

It belongs to the class-II aminoacyl-tRNA synthetase family. Homodimer.

The protein resides in the cytoplasm. The catalysed reaction is tRNA(His) + L-histidine + ATP = L-histidyl-tRNA(His) + AMP + diphosphate + H(+). The polypeptide is Histidine--tRNA ligase (Rickettsia bellii (strain RML369-C)).